The chain runs to 222 residues: Acyl-protein thioesterase 1 homolog 2 (222 aa).

Catalysis depends on charge relay system residues S116, D169, and H202.

This sequence belongs to the AB hydrolase superfamily. AB hydrolase 2 family.

Its subcellular location is the cytoplasm. It localises to the nucleus. The catalysed reaction is S-hexadecanoyl-L-cysteinyl-[protein] + H2O = L-cysteinyl-[protein] + hexadecanoate + H(+). Functionally, hydrolyzes fatty acids from S-acylated cysteine residues in proteins with a strong preference for palmitoylated G-alpha proteins over other acyl substrates. Mediates the deacylation of G-alpha proteins such as GPA1 in vivo, but has weak or no activity toward palmitoylated Ras proteins. Has weak lysophospholipase activity in vitro; however such activity may not exist in vivo. The polypeptide is Acyl-protein thioesterase 1 homolog 2 (Dictyostelium discoideum (Social amoeba)).